A 428-amino-acid polypeptide reads, in one-letter code: Chaperone SurA (428 aa).

Residues 1–20 form the signal peptide; that stretch reads MKNWKTLLLGIAMIANTSFA. PpiC domains lie at 171–272 and 282–382; these read STEL…KVND and VTEV…ELLD.

It localises to the periplasm. It carries out the reaction [protein]-peptidylproline (omega=180) = [protein]-peptidylproline (omega=0). In terms of biological role, chaperone involved in the correct folding and assembly of outer membrane proteins. Recognizes specific patterns of aromatic residues and the orientation of their side chains, which are found more frequently in integral outer membrane proteins. May act in both early periplasmic and late outer membrane-associated steps of protein maturation. In Salmonella choleraesuis (strain SC-B67), this protein is Chaperone SurA.